Consider the following 248-residue polypeptide: Probable transcriptional regulatory protein BOV_1660 (248 aa).

It belongs to the TACO1 family.

It localises to the cytoplasm. In Brucella ovis (strain ATCC 25840 / 63/290 / NCTC 10512), this protein is Probable transcriptional regulatory protein BOV_1660.